The following is a 484-amino-acid chain: ATP synthase subunit beta (484 aa).

169-176 (GGAGVGKT) contributes to the ATP binding site.

The protein belongs to the ATPase alpha/beta chains family. F-type ATPases have 2 components, CF(1) - the catalytic core - and CF(0) - the membrane proton channel. CF(1) has five subunits: alpha(3), beta(3), gamma(1), delta(1), epsilon(1). CF(0) has three main subunits: a(1), b(2) and c(9-12). The alpha and beta chains form an alternating ring which encloses part of the gamma chain. CF(1) is attached to CF(0) by a central stalk formed by the gamma and epsilon chains, while a peripheral stalk is formed by the delta and b chains.

It is found in the cell membrane. The enzyme catalyses ATP + H2O + 4 H(+)(in) = ADP + phosphate + 5 H(+)(out). Produces ATP from ADP in the presence of a proton gradient across the membrane. The catalytic sites are hosted primarily by the beta subunits. The sequence is that of ATP synthase subunit beta from Nocardioides sp. (strain ATCC BAA-499 / JS614).